Reading from the N-terminus, the 431-residue chain is Adenylosuccinate synthetase (431 aa).

GTP is bound by residues 21 to 27 and 49 to 51; these read GDEGKGK and GHT. Residue D22 is the Proton acceptor of the active site. D22 and G49 together coordinate Mg(2+). IMP contacts are provided by residues 22 to 25, 47 to 50, T138, R152, N230, T245, and R309; these read DEGK and NAGH. The active-site Proton donor is H50. Substrate is bound at residue 305–311; sequence ATTGRPR. Residues R311, 337–339, and 419–421 each bind GTP; these read KLD and GNG.

It belongs to the adenylosuccinate synthetase family. As to quaternary structure, homodimer. Mg(2+) is required as a cofactor.

The protein resides in the cytoplasm. The enzyme catalyses IMP + L-aspartate + GTP = N(6)-(1,2-dicarboxyethyl)-AMP + GDP + phosphate + 2 H(+). It functions in the pathway purine metabolism; AMP biosynthesis via de novo pathway; AMP from IMP: step 1/2. Its function is as follows. Plays an important role in the de novo pathway and in the salvage pathway of purine nucleotide biosynthesis. Catalyzes the first committed step in the biosynthesis of AMP from IMP. The chain is Adenylosuccinate synthetase from Paramecium tetraurelia.